A 520-amino-acid polypeptide reads, in one-letter code: FNIP repeat-containing protein DDB_G0274063/DDB_G0272642 (520 aa).

Disordered regions lie at residues 47–86 (QQQSNNNNNNNNNNNNNNNNNNFINFSNHTNNINNNIDNR) and 100–121 (NISSSSPYTLTSTPSSSSSSSS). Over residues 51–84 (NNNNNNNNNNNNNNNNNNFINFSNHTNNINNNID) the composition is skewed to low complexity. FNIP repeat units lie at residues 242 to 285 (YNNN…FGES), 286 to 331 (FNQD…FGLS), 332 to 406 (YNQP…FGVQ), and 453 to 496 (FNQQ…FHNS).

This Dictyostelium discoideum (Social amoeba) protein is FNIP repeat-containing protein DDB_G0274063/DDB_G0272642.